A 508-amino-acid chain; its full sequence is Putative glycosyl hydrolase ecdF (508 aa).

A signal peptide spans 1–15 (MFLHILCLLAGQALA). 4 N-linked (GlcNAc...) asparagine glycosylation sites follow: Asn99, Asn122, Asn275, and Asn362.

The protein belongs to the glycosyl hydrolase 32 family.

In Aspergillus rugulosus (Emericella rugulosa), this protein is Putative glycosyl hydrolase ecdF.